A 171-amino-acid chain; its full sequence is MTKQNAFTREDLLRCSRGELFGPGNAQLPAPNMLMVDRITHISEEGGKYGKGELVAELDITPDLWFFACHFEGDPVMPGCLGLDAMWQLVGFFLGWQGLPGRGRALGSGEVKFFGQVLPTAKKVTYNIHIKRVLKGKLNMAIADGSVSVDGREIYTAEGLRVGVFTSTDNF.

H70 is a catalytic residue.

It belongs to the thioester dehydratase family. FabA subfamily. Homodimer.

The protein resides in the cytoplasm. The enzyme catalyses a (3R)-hydroxyacyl-[ACP] = a (2E)-enoyl-[ACP] + H2O. It carries out the reaction (3R)-hydroxydecanoyl-[ACP] = (2E)-decenoyl-[ACP] + H2O. The catalysed reaction is (2E)-decenoyl-[ACP] = (3Z)-decenoyl-[ACP]. It functions in the pathway lipid metabolism; fatty acid biosynthesis. Necessary for the introduction of cis unsaturation into fatty acids. Catalyzes the dehydration of (3R)-3-hydroxydecanoyl-ACP to E-(2)-decenoyl-ACP and then its isomerization to Z-(3)-decenoyl-ACP. Can catalyze the dehydratase reaction for beta-hydroxyacyl-ACPs with saturated chain lengths up to 16:0, being most active on intermediate chain length. This is 3-hydroxydecanoyl-[acyl-carrier-protein] dehydratase from Pseudomonas fluorescens (strain ATCC BAA-477 / NRRL B-23932 / Pf-5).